A 184-amino-acid chain; its full sequence is uncharacterized protein (184 aa).

The Nudix hydrolase domain occupies 36-164 (LRHRATYIVV…TPDSLKALAL (129 aa)). The short motif at 73–95 (GGVVQADEQLLESARREAEEELG) is the Nudix box element. The Mg(2+) site is built by Glu89 and Glu93.

It belongs to the Nudix hydrolase family. Mg(2+) is required as a cofactor.

This is an uncharacterized protein from Salmonella typhi.